The chain runs to 707 residues: Polyribonucleotide nucleotidyltransferase (707 aa).

Mg(2+) is bound by residues aspartate 486 and aspartate 492. Residues 553-612 form the KH domain; the sequence is PRIHIIKINPEKIKDVIGKGGSVIRMLTEETGTIIEIEDDGTVKISSTVKEKAKNAIRRI. Residues 622-690 enclose the S1 motif domain; it reads GRIYSGKVTR…RQGRLRLSIK (69 aa).

Belongs to the polyribonucleotide nucleotidyltransferase family. In terms of assembly, component of the RNA degradosome, which is a multiprotein complex involved in RNA processing and mRNA degradation. It depends on Mg(2+) as a cofactor.

The protein localises to the cytoplasm. It carries out the reaction RNA(n+1) + phosphate = RNA(n) + a ribonucleoside 5'-diphosphate. Involved in mRNA degradation. Catalyzes the phosphorolysis of single-stranded polyribonucleotides processively in the 3'- to 5'-direction. The polypeptide is Polyribonucleotide nucleotidyltransferase (Buchnera aphidicola subsp. Acyrthosiphon pisum (strain 5A)).